Reading from the N-terminus, the 145-residue chain is MDINEIMKILPHRFPFLMVDRIVEMEPGKRCVGLKNVTINEPFFQGHFPGHPVMPGVLIVEAMAQVAGIMAYLASDDETRKKVSYFMAIDNAKFRKPVFPGDQLRIEVETIFSRRGIWSVAGKAYVDGVLATEAELKATFAEKAK.

The active site involves H47.

The protein belongs to the thioester dehydratase family. FabZ subfamily.

It localises to the cytoplasm. It carries out the reaction a (3R)-hydroxyacyl-[ACP] = a (2E)-enoyl-[ACP] + H2O. Functionally, involved in unsaturated fatty acids biosynthesis. Catalyzes the dehydration of short chain beta-hydroxyacyl-ACPs and long chain saturated and unsaturated beta-hydroxyacyl-ACPs. The chain is 3-hydroxyacyl-[acyl-carrier-protein] dehydratase FabZ from Geotalea uraniireducens (strain Rf4) (Geobacter uraniireducens).